Reading from the N-terminus, the 213-residue chain is Kynurenine formamidase (213 aa).

Substrate is bound at residue tryptophan 18. Residues histidine 48, histidine 52, and aspartate 54 each contribute to the Zn(2+) site. Histidine 58 (proton donor/acceptor) is an active-site residue. The Zn(2+) site is built by histidine 160 and glutamate 172.

Belongs to the Cyclase 1 superfamily. KynB family. Homodimer. The cofactor is Zn(2+).

It carries out the reaction N-formyl-L-kynurenine + H2O = L-kynurenine + formate + H(+). It participates in amino-acid degradation; L-tryptophan degradation via kynurenine pathway; L-kynurenine from L-tryptophan: step 2/2. Its function is as follows. Catalyzes the hydrolysis of N-formyl-L-kynurenine to L-kynurenine, the second step in the kynurenine pathway of tryptophan degradation. This Burkholderia pseudomallei (strain 1710b) protein is Kynurenine formamidase.